We begin with the raw amino-acid sequence, 1506 residues long: Transcriptional repressor NF-X1 homolog (1506 aa).

The segment covering 1 to 12 has biased composition (polar residues); the sequence is MEESQNIPPKTQ. Disordered stretches follow at residues 1–123, 142–164, and 181–282; these read MEES…NNQL, LKSE…QEPT, and KAFV…KKDI. Composition is skewed to low complexity over residues 13–103 and 110–121; these read TLNN…SNSN and HNNNYNNNNNNN. Over residues 194–209 the composition is skewed to low complexity; that stretch reads NNTNNNNNNNNNNNNN. A compositionally biased stretch (basic and acidic residues) spans 217 to 232; the sequence is DNNRPQRERRERKPKE. Residues 240–252 show a composition bias toward pro residues; the sequence is PQQPQQPQQPQPQ. Residues 253–263 show a composition bias toward low complexity; it reads PQQQQQSQQQQ. The segment covering 267–282 has biased composition (basic and acidic residues); sequence ENNRKKENKLQSKKDI. The PHD-type zinc finger occupies 363-416; it reads IYECMVCFENVGKNAVIWSCSQCFTMFHSSCIKQWSSKSVTTEGKWKCPGCRYN. Residues 366–414 form an RING-type; degenerate zinc finger; sequence CMVCFENVGKNAVIWSCSQCFTMFHSSCIKQWSSKSVTTEGKWKCPGCR. 7 consecutive NF-X1-type zinc fingers follow at residues 460–478, 515–534, 581–600, 642–661, 739–758, 796–817, and 852–868; these read CPHS…NCSS, CGNH…PCEV, CGNH…PCSL, CKQH…SCKV, CGVH…NCYI, CGHS…PCTY, and CLSH…PCLI. Disordered stretches follow at residues 897 to 1012 and 1021 to 1040; these read QQSK…VDLN and NEEE…DEDE. Over residues 903–921 the composition is skewed to low complexity; it reads TTTTTTTTTTSTTSTTSPK. Acidic residues predominate over residues 925–934; that stretch reads KDEELIEDDN. Over residues 935–980 the composition is skewed to low complexity; it reads NNNNNNNNNNNNNNNNNNNNNNNNNNNNNNNNNNNNNNNNNNNNNN. Basic and acidic residues-rich tracts occupy residues 981-1002 and 1021-1031; these read EKAE…HSDD and NEEEERIKKEE. The NF-X1-type 8 zinc-finger motif lies at 1062 to 1084; sequence CEHTCHQACHPGEPCPTNISCKQ. Disordered stretches follow at residues 1132–1167 and 1447–1473; these read SHTL…SSPT and NQNQ…IKPT. 2 stretches are compositionally biased toward low complexity: residues 1137–1167 and 1447–1470; these read NNPN…SSPT and NQNQ…NINI.

It belongs to the NFX1 family.

Its subcellular location is the nucleus. May play a role in transcription regulation. This Dictyostelium discoideum (Social amoeba) protein is Transcriptional repressor NF-X1 homolog (nfx1).